The following is a 438-amino-acid chain: 23S rRNA (uracil(1939)-C(5))-methyltransferase RlmD (438 aa).

One can recognise a TRAM domain in the interval 11–69; it reads LQPESKHQQVLVEKLDHQGAGIAYLNKKPLFIDGTLPGEEVVTQLTESKSKFARGKLIK. [4Fe-4S] cluster-binding residues include Cys82, Cys88, Cys91, and Cys169. S-adenosyl-L-methionine contacts are provided by Gln272, Phe301, Asn306, Glu322, Asn349, and Asp370. Cys396 (nucleophile) is an active-site residue.

This sequence belongs to the class I-like SAM-binding methyltransferase superfamily. RNA M5U methyltransferase family. RlmD subfamily.

The catalysed reaction is uridine(1939) in 23S rRNA + S-adenosyl-L-methionine = 5-methyluridine(1939) in 23S rRNA + S-adenosyl-L-homocysteine + H(+). Catalyzes the formation of 5-methyl-uridine at position 1939 (m5U1939) in 23S rRNA. The sequence is that of 23S rRNA (uracil(1939)-C(5))-methyltransferase RlmD from Vibrio vulnificus (strain CMCP6).